The primary structure comprises 199 residues: UPF0301 protein Ajs_3573 (199 aa).

It belongs to the UPF0301 (AlgH) family.

The chain is UPF0301 protein Ajs_3573 from Acidovorax sp. (strain JS42).